The following is a 328-amino-acid chain: DNA-directed RNA polymerase subunit alpha (328 aa).

An alpha N-terminal domain (alpha-NTD) region spans residues 1-232 (MSTQGFLKPR…DQISVFAALE (232 aa)). Residues 248–328 (IDPVLLRPVD…NWPPLGLERP (81 aa)) form an alpha C-terminal domain (alpha-CTD) region.

It belongs to the RNA polymerase alpha chain family. In terms of assembly, homodimer. The RNAP catalytic core consists of 2 alpha, 1 beta, 1 beta' and 1 omega subunit. When a sigma factor is associated with the core the holoenzyme is formed, which can initiate transcription.

It catalyses the reaction RNA(n) + a ribonucleoside 5'-triphosphate = RNA(n+1) + diphosphate. In terms of biological role, DNA-dependent RNA polymerase catalyzes the transcription of DNA into RNA using the four ribonucleoside triphosphates as substrates. The protein is DNA-directed RNA polymerase subunit alpha of Bordetella avium (strain 197N).